The following is a 390-amino-acid chain: Succinate--CoA ligase [ADP-forming] subunit beta (390 aa).

An ATP-grasp domain is found at 9–244; that stretch reads KEILKRYGVN…ETQTDTSENE (236 aa). Residues Lys46, 53–55, Glu99, Leu102, and Glu107 each bind ATP; that span reads GRG. 2 residues coordinate Mg(2+): Asn199 and Asp213. Residues Asn264 and 321-323 each bind substrate; that span reads GIV.

This sequence belongs to the succinate/malate CoA ligase beta subunit family. Heterotetramer of two alpha and two beta subunits. It depends on Mg(2+) as a cofactor.

The enzyme catalyses succinate + ATP + CoA = succinyl-CoA + ADP + phosphate. It carries out the reaction GTP + succinate + CoA = succinyl-CoA + GDP + phosphate. It participates in carbohydrate metabolism; tricarboxylic acid cycle; succinate from succinyl-CoA (ligase route): step 1/1. Functionally, succinyl-CoA synthetase functions in the citric acid cycle (TCA), coupling the hydrolysis of succinyl-CoA to the synthesis of either ATP or GTP and thus represents the only step of substrate-level phosphorylation in the TCA. The beta subunit provides nucleotide specificity of the enzyme and binds the substrate succinate, while the binding sites for coenzyme A and phosphate are found in the alpha subunit. The chain is Succinate--CoA ligase [ADP-forming] subunit beta from Campylobacter curvus (strain 525.92).